The following is a 1317-amino-acid chain: DNA-directed RNA polymerase subunit beta' (1317 aa).

4 residues coordinate Zn(2+): C214, C286, C293, and C296. Positions 1279–1317 are disordered; sequence RAYAGTQLSQDDEEFEETYDTDEDDFDMDDDDDFGDDED. Residues 1288-1317 are compositionally biased toward acidic residues; sequence QDDEEFEETYDTDEDDFDMDDDDDFGDDED.

It belongs to the RNA polymerase beta' chain family. RpoC2 subfamily. In terms of assembly, in cyanobacteria the RNAP catalytic core is composed of 2 alpha, 1 beta, 1 beta', 1 gamma and 1 omega subunit. When a sigma factor is associated with the core the holoenzyme is formed, which can initiate transcription. Zn(2+) is required as a cofactor.

The enzyme catalyses RNA(n) + a ribonucleoside 5'-triphosphate = RNA(n+1) + diphosphate. Its function is as follows. DNA-dependent RNA polymerase catalyzes the transcription of DNA into RNA using the four ribonucleoside triphosphates as substrates. The polypeptide is DNA-directed RNA polymerase subunit beta' (Synechocystis sp. (strain ATCC 27184 / PCC 6803 / Kazusa)).